The sequence spans 318 residues: Melanocyte-stimulating hormone receptor (318 aa).

The Extracellular portion of the chain corresponds to 1–37 (MPMQGAQRKLLGSLNSTPTATSNLGLAANRTGAPCLE). A glycan (N-linked (GlcNAc...) asparagine) is linked at N29. A helical membrane pass occupies residues 38–63 (LPIPNGLFLSLGLVSLVENVLVVAAI). The Cytoplasmic portion of the chain corresponds to 64-72 (AKNRNLHSS). Residues 73–93 (MYCFICCLALSDLLVSGSNML) traverse the membrane as a helical segment. The Extracellular segment spans residues 94-118 (ETAVILLLEAGVLATRASVVQQLHN). Residues 119-140 (TIDVLTCSSMLCSLCFLGAIAV) traverse the membrane as a helical segment. Residues 141-163 (DRYISIFYALRYHSIMTLPRAQR) are Cytoplasmic-facing. Residues 164-183 (AVAAIWVASVLSSTLFITYY) traverse the membrane as a helical segment. Over 184 to 191 (DHAAVLLC) the chain is Extracellular. The chain crosses the membrane as a helical span at residues 192–211 (LMVFFLAMLVLMAVLYVHML). At 212–240 (ARARQHAQGIIRLHKRQPPAHKGFGLRGA) the chain is on the cytoplasmic side. A helical transmembrane segment spans residues 241–266 (ATLTILLGIFFLCWGPFFLCLTLVVF). Residues 267 to 279 (CPQHLTCNCIFKN) lie on the Extracellular side of the membrane. Residues 280 to 300 (FKVFLTLIICNTIIDPLIYAF) traverse the membrane as a helical segment. The Cytoplasmic portion of the chain corresponds to 301-317 (RSQELRRMLKEVLGRGR).

The protein belongs to the G-protein coupled receptor 1 family. In terms of assembly, interacts with MGRN1, but does not undergo MGRN1-mediated ubiquitination; this interaction competes with GNAS-binding and thus inhibits agonist-induced cAMP production. Interacts with OPN3; the interaction results in a decrease in MC1R-mediated cAMP signaling and ultimately a decrease in melanin production in melanocytes.

It is found in the cell membrane. In terms of biological role, receptor for MSH (alpha, beta and gamma) and ACTH. The activity of this receptor is mediated by G proteins which activate adenylate cyclase. Mediates melanogenesis, the production of eumelanin (black/brown) and phaeomelanin (red/yellow), via regulation of cAMP signaling in melanocytes. This is Melanocyte-stimulating hormone receptor (MC1R) from Leontopithecus rosalia (Golden lion tamarin).